Consider the following 433-residue polypeptide: MERYKVIREIGDGTCGNVFRAYNTETNEIVAVKKMKRKFFQWEECISLREVKALQKLNHPNIVKLKEVTMENHELFFIFENMECNLYDVIRERQAAFSEEEIRNFMVQILQGLAYMHNNGYFHRDLKPENLLVTDGTVKIADFGLAREVSSSPPYTDYVSTRWYRAPEVLLQSSAYTPAIDMWAVGAILAELFTLSPLFPGGSETDQLYKICAVLGTPDHTVWPEGMNLPRSSSFNFFQIPPRNLWELIPNATLEAIDLIQQLCSWDPRRRPTAEQSLQHPFFNVGNWVPRPLHASHTKTIETRPNPRLELNLWDFGTEPEDNYLDLTLSLKPSFPGTDFSNNVPEHTKEEILLYPGFENPPVQSGFWPLVASDRPMGDVPAMSSWPQAYVVDGQATLPAVGFSGSPFGLSPLQPNLFENRSFATPIRQVNFF.

The Protein kinase domain occupies 4–283 (YKVIREIGDG…AEQSLQHPFF (280 aa)). Residues 10 to 18 (IGDGTCGNV) and Lys-33 each bind ATP. Asp-125 acts as the Proton acceptor in catalysis. Ser-151 bears the Phosphoserine mark. The residue at position 156 (Thr-156) is a Phosphothreonine.

It belongs to the protein kinase superfamily. CMGC Ser/Thr protein kinase family. CDC2/CDKX subfamily.

The catalysed reaction is L-seryl-[protein] + ATP = O-phospho-L-seryl-[protein] + ADP + H(+). The enzyme catalyses L-threonyl-[protein] + ATP = O-phospho-L-threonyl-[protein] + ADP + H(+). It carries out the reaction [DNA-directed RNA polymerase] + ATP = phospho-[DNA-directed RNA polymerase] + ADP + H(+). This chain is Cyclin-dependent kinase F-3 (CDKF-3), found in Oryza sativa subsp. japonica (Rice).